Here is a 90-residue protein sequence, read N- to C-terminus: uncharacterized protein (90 aa).

Helical transmembrane passes span 17 to 37 (ILSM…IYLV) and 55 to 75 (ICFG…WGIA).

The protein localises to the membrane. This is an uncharacterized protein from Schizosaccharomyces pombe (strain 972 / ATCC 24843) (Fission yeast).